Reading from the N-terminus, the 189-residue chain is Phomopsin biosynthesis cluster protein C' (189 aa).

The protein belongs to the oryJ family.

Part of the gene cluster that mediates the biosynthesis of the phomopsins, a group of hexapeptide mycotoxins which infects lupins and causes lupinosis disease in livestock. The role of phomC' within the phomopsins biosynthesis pathway has still to be determined. The pathway starts with the processing of the precursor phomA by several endopeptidases including kexin proteases as well as the cluster-specific S41 family peptidase phomP1 and the oligopeptidase phomG to produce 10 identical copies of the hexapeptide Tyr-Val-Ile-Pro-Ile-Asp. After being excised from the precursor peptide, the core peptides are cyclized and modified post-translationally by enzymes encoded within the gene cluster. The timing and order of proteolysis of the phomA precursor and PTMs are still unknown. Two tyrosinase-like enzymes, phomQ1 and phomQ2, catalyze the chlorination and hydroxylation of Tyr, respectively. PhomYb, is proposed to be involved in the construction of the macrocyclic structure. The other 4 ustYa family proteins may be involved in PTMs that generate the unique structure of phomopsin A. PhomYa is required for the hydroxylation of C-beta of Tyr. PhomYc, phomYd, and phomYe are responsible for the biosynthesis of 2,3-dehydroisoleucine (dIle), 2,3-dehydroaspartic acid (dAsp), and 3,4-dehydroproline (dPro), respectively. While dIle formation by phomYc is indispensable for the installation of dAsp by phomYd, the order of the other PTMs have not been elucidated yet. Most of the biosynthetic enzymes likely have broad substrate specificity, and thus, there might be a metabolic grid from a precursor to phomopsin A. The enzyme(s) responsible for the biosynthesis of 3,4-dehydrovaline (dVal) have also not been identified yet. Finally, phomM acts as an S-adenosylmethionine-dependent alpha-N-methyltransferase that catalyzes two successive N-methylation reactions, converting N-desmethyl-phomopsin A to phomopsin A and phomopsin A further to an N,N-dimethylated congener called phomopsin E. In Diaporthe leptostromiformis (Lupinosis disease fungus), this protein is Phomopsin biosynthesis cluster protein C'.